A 514-amino-acid polypeptide reads, in one-letter code: GMP synthase [glutamine-hydrolyzing] (514 aa).

The 191-residue stretch at 9 to 199 (KIIVLDFGSQ…ALNVCGCKGD (191 aa)) folds into the Glutamine amidotransferase type-1 domain. The Nucleophile role is filled by Cys-86. Catalysis depends on residues His-173 and Glu-175. Residues 200–389 (WTMENFSEVE…LGMPDAIVWR (190 aa)) form the GMPS ATP-PPase domain. 227–233 (SGGVDSS) provides a ligand contact to ATP.

As to quaternary structure, homodimer.

The enzyme catalyses XMP + L-glutamine + ATP + H2O = GMP + L-glutamate + AMP + diphosphate + 2 H(+). Its pathway is purine metabolism; GMP biosynthesis; GMP from XMP (L-Gln route): step 1/1. Its function is as follows. Catalyzes the synthesis of GMP from XMP. The protein is GMP synthase [glutamine-hydrolyzing] of Listeria monocytogenes serotype 4b (strain F2365).